Consider the following 59-residue polypeptide: Large ribosomal subunit protein bL32 (59 aa).

It belongs to the bacterial ribosomal protein bL32 family.

This chain is Large ribosomal subunit protein bL32, found in Limosilactobacillus reuteri (strain DSM 20016) (Lactobacillus reuteri).